The following is a 248-amino-acid chain: 14-3-3-like protein 2 (248 aa).

The protein belongs to the 14-3-3 family. In terms of assembly, interacts with daf-16. Interacts with sir-2.1. Interacts with hcf-1.

Its subcellular location is the cytoplasm. It is found in the nucleus. Its function is as follows. Required for extension of lifespan by sir-2.1. Required to modulate lifespan, in concert with hcf-1, acting redundantly with 14-3-3-like protein par-5. Promotes nuclear export of yap-1. Negatively regulates the transcriptional activity of daf-16 by sequestering it to the cytoplasm. The protein is 14-3-3-like protein 2 of Caenorhabditis elegans.